Reading from the N-terminus, the 274-residue chain is Undecaprenyl-diphosphatase (274 aa).

The next 8 membrane-spanning stretches (helical) occupy residues 9 to 29, 47 to 67, 95 to 115, 120 to 140, 161 to 181, 197 to 217, 224 to 244, and 254 to 274; these read LEYL…FIPV, PGAS…AWYF, ILIG…FVPY, VLRS…FMYL, LIGF…GITI, FSFL…FISS, LGFF…LLAI, and NGLK…LLNL.

The protein belongs to the UppP family.

It localises to the cell inner membrane. It carries out the reaction di-trans,octa-cis-undecaprenyl diphosphate + H2O = di-trans,octa-cis-undecaprenyl phosphate + phosphate + H(+). Catalyzes the dephosphorylation of undecaprenyl diphosphate (UPP). Confers resistance to bacitracin. This is Undecaprenyl-diphosphatase from Prochlorococcus marinus (strain AS9601).